The primary structure comprises 552 residues: Cation/acetate symporter ActP (552 aa).

A run of 14 helical transmembrane segments spans residues 5 to 25, 35 to 55, 78 to 98, 105 to 125, 151 to 171, 185 to 205, 208 to 228, 264 to 284, 305 to 325, 357 to 377, 407 to 427, 431 to 451, 466 to 486, and 499 to 519; these read FMML…DALT, IQAI…TYWA, GLAI…SALV, GLIY…LIAE, LSAC…MVGA, VAVI…GMLA, WVQI…AVMV, ISAL…PHIL, GFMG…ILLV, FFLG…VAGL, VSKI…ILFE, IAFM…PIII, IGGW…PTIW, and YDYP…FFSI.

Belongs to the sodium:solute symporter (SSF) (TC 2.A.21) family.

It is found in the cell inner membrane. Functionally, transports acetate. The chain is Cation/acetate symporter ActP from Pectobacterium carotovorum subsp. carotovorum (strain PC1).